Consider the following 695-residue polypeptide: Protein ACTIVITY OF BC1 COMPLEX KINASE 7, chloroplastic (695 aa).

A Protein kinase domain is found at 259 to 589 (EFEEQPIAAA…VQEIRKQADD (331 aa)). Residues 265 to 273 (IAAASLGQV) and Lys287 contribute to the ATP site. Asp421 serves as the catalytic Proton acceptor. Transmembrane regions (helical) follow at residues 633–653 (TILQMATMYTVLGGTLLNIGV) and 659–679 (GSQLVANGSFIGAGIFMLLVL).

The protein belongs to the protein kinase superfamily. ADCK protein kinase family. In terms of tissue distribution, mostly expressed in leaves and flowers, and, to a lower extent, in roots.

It is found in the plastid. The protein resides in the chloroplast thylakoid membrane. It localises to the chloroplast. The protein localises to the plastoglobule. The catalysed reaction is L-seryl-[protein] + ATP = O-phospho-L-seryl-[protein] + ADP + H(+). The enzyme catalyses L-threonyl-[protein] + ATP = O-phospho-L-threonyl-[protein] + ADP + H(+). Its function is as follows. Involved in resistance to oxidative stress. Influences responses to reactive oxygen species (ROS) production. Regulates plastoglobules formation in thylakoids. Together with OSA1, regulates iron distribution within the chloroplast and mediates the oxidative stress response. Together with ABC1K8, influences chloroplast lipid synthesis/accumulation and modulates chloroplast membrane composition in response to stress. The protein is Protein ACTIVITY OF BC1 COMPLEX KINASE 7, chloroplastic of Arabidopsis thaliana (Mouse-ear cress).